We begin with the raw amino-acid sequence, 1276 residues long: Sterol regulatory element-binding protein cleavage-activating protein (1276 aa).

Residues 1–18 (MTLTERLREKISQAFYNH) lie on the Cytoplasmic side of the membrane. A helical membrane pass occupies residues 19–39 (GLLCASYPIPIILFTGLCILA). Topologically, residues 40–279 (CCYPLLKLPL…NLVHVHFKEE (240 aa)) are lumenal. The interval 46-284 (KLPLPGTGPV…HFKEEIGIAE (239 aa)) is loop-1. Residues 60–81 (PVKDYSPPPVDSDHKQGEPSEQ) form a disordered region. Asn-263 carries an N-linked (GlcNAc...) asparagine glycan. A helical membrane pass occupies residues 280–300 (IGIAELIPLVTTYIILFAYIY). Residues 284–442 (ELIPLVTTYI…MFFFTTVLSI (159 aa)) enclose the SSD domain. The Cytoplasmic segment spans residues 301–312 (FSTRKIDMVKSK). A helical transmembrane segment spans residues 313–333 (WGLALAAVVTVLSSLLMSVGL). Topologically, residues 334–344 (CTLFGLTPTLN) are lumenal. The helical transmembrane segment at 345-365 (GGEIFPYLVVVIGLENVLVLT) threads the bilayer. Topologically, residues 366–401 (KSVVSTPVDLEVKLRIAQGLSSESWSIMKNVATELG) are cytoplasmic. A helical transmembrane segment spans residues 402–422 (IILIGYFTLVPAIQEFCLFAV). Residue Val-423 is a topological domain, lumenal. The chain crosses the membrane as a helical span at residues 424 to 444 (GLVSDFFLQMFFFTTVLSIDI). Topologically, residues 445–518 (RRMELADLNK…FLARTRLAQR (74 aa)) are cytoplasmic. Residues 447–452 (MELADL) carry the ER export signal motif. Residues Lys-454 and Lys-466 each participate in a glycyl lysine isopeptide (Lys-Gly) (interchain with G-Cter in ubiquitin) cross-link. A helical membrane pass occupies residues 519–539 (LIMAGTVVWIGILVYTDPAGL). Residues 535–710 (DPAGLRTYLA…QAHGDITLYK (176 aa)) form a loop-7 region. At 540–708 (RTYLAAQVTE…GTQAHGDITL (169 aa)) the chain is on the lumenal side. Asn-590 and Asn-641 each carry an N-linked (GlcNAc...) asparagine glycan. A helical membrane pass occupies residues 709–729 (YKVAALGLAAGIVLVLLLLCL). Topologically, residues 730 to 1276 (YRVLCPRNYG…YVPSVLEKLD (547 aa)) are cytoplasmic. Residues 731 to 1276 (RVLCPRNYGQ…YVPSVLEKLD (546 aa)) are interaction with SREBF2. A WD 1 repeat occupies 771–811 (VLRGHLMDIECLASDGMLLVSCCLAGQVCVWDAQTGDCLTR). Residues 816-903 (GSRRDSCGGG…RHRAGCGRAR (88 aa)) are disordered. Phosphoserine is present on residues Ser-821, Ser-837, Ser-843, Ser-850, Ser-905, and Ser-934. Residues 928–957 (PALRPPSPGSPLPQASQEDGAAPEKGSPPL) are disordered. WD repeat units follow at residues 949–999 (APEK…LCCS) and 1002–1039 (EVSS…SLSP). Omega-N-methylarginine is present on Arg-1048. WD repeat units lie at residues 1074 to 1111 (AHQK…CLFT), 1114 to 1152 (GHSG…RVSH), 1155 to 1192 (AHRG…KLYS), and 1194 to 1232 (QQDL…LLQT).

The protein belongs to the WD repeat SCAP family. As to quaternary structure, membrane region forms a homotetramer. Component of the SCAP-SREBP complex (composed of SCAP and SREBF1/SREBP1 or SREBF2/SREBP2); interacts with SREBF1/SREBP1 or SREBF2/SREBP2 through its C-terminal cytoplasmic domain. Forms a ternary complex with INSIG1 or INSIG2 through its transmembrane domains at high sterol concentrations. Interacts with PAQR3; the interaction anchors the SCAP-SREBP complex to the Golgi apparatus in low cholesterol conditions. Interacts with the SEC23-SEC24 complex in a SAR1-GTP-dependent manner through an ER export signal in its third cytoplasmic loop. Interacts with RNF139; the interaction inhibits the interaction of SCAP with SEC24B and hampering the ER to Golgi transport of the SCAP-SREBP complex. Interacts with SPRING. Post-translationally, ubiquitinated at Lys-454 and Lys-466. RNF145 triggers ubiquitination of SCAP, likely inhibiting SCAP-SREBP complex transport to the Golgi apparatus and the subsequent processing/maturation of SREBF2/SREBP2.

It is found in the endoplasmic reticulum membrane. Its subcellular location is the golgi apparatus membrane. It localises to the cytoplasmic vesicle. The protein resides in the COPII-coated vesicle membrane. In terms of biological role, escort protein required for cholesterol as well as lipid homeostasis. Regulates export of the SCAP-SREBP complex from the endoplasmic reticulum to the Golgi upon low cholesterol, thereby regulating the processing of sterol regulatory element-binding proteins (SREBPs) SREBF1/SREBP1 and SREBF2/SREBP2. At high sterol concentrations, formation of a ternary complex with INSIG (INSIG1 or INSIG2) leads to mask the ER export signal in SCAP, promoting retention of the complex in the endoplasmic reticulum. Low sterol concentrations trigger release of INSIG, a conformational change in the SSD domain of SCAP, unmasking of the ER export signal, promoting recruitment into COPII-coated vesicles and transport of the SCAP-SREBP to the Golgi: in the Golgi, SREBPs are then processed, releasing the transcription factor fragment of SREBPs from the membrane, its import into the nucleus and up-regulation of LDLR, INSIG1 and the mevalonate pathway. Binds cholesterol via its SSD domain. In Cricetulus griseus (Chinese hamster), this protein is Sterol regulatory element-binding protein cleavage-activating protein.